Reading from the N-terminus, the 269-residue chain is Protein-L-isoaspartate O-methyltransferase (269 aa).

The tract at residues 1–53 (MSAGQRPAPKFPLRLDQVKPAGRSGAAPLLRPQRPLHQAATERGRGTTPAGLG) is disordered. Residue serine 113 is part of the active site.

This sequence belongs to the methyltransferase superfamily. L-isoaspartyl/D-aspartyl protein methyltransferase family.

Its subcellular location is the cytoplasm. The enzyme catalyses [protein]-L-isoaspartate + S-adenosyl-L-methionine = [protein]-L-isoaspartate alpha-methyl ester + S-adenosyl-L-homocysteine. In terms of biological role, catalyzes the methyl esterification of L-isoaspartyl residues in peptides and proteins that result from spontaneous decomposition of normal L-aspartyl and L-asparaginyl residues. It plays a role in the repair and/or degradation of damaged proteins. This chain is Protein-L-isoaspartate O-methyltransferase, found in Methylibium petroleiphilum (strain ATCC BAA-1232 / LMG 22953 / PM1).